An 88-amino-acid polypeptide reads, in one-letter code: Phosphocarrier protein HPr (88 aa).

One can recognise an HPr domain in the interval 1 to 88; sequence MASKEFHIVA…ETMTKEGLAE (88 aa). H15 functions as the Pros-phosphohistidine intermediate in the catalytic mechanism. A Phosphoserine; by HPrK/P modification is found at S46.

It belongs to the HPr family.

Its subcellular location is the cytoplasm. Phosphorylation on Ser-46 inhibits the phosphoryl transfer from enzyme I to HPr. Functionally, general (non sugar-specific) component of the phosphoenolpyruvate-dependent sugar phosphotransferase system (sugar PTS). This major carbohydrate active-transport system catalyzes the phosphorylation of incoming sugar substrates concomitantly with their translocation across the cell membrane. The phosphoryl group from phosphoenolpyruvate (PEP) is transferred to the phosphoryl carrier protein HPr by enzyme I. Phospho-HPr then transfers it to the PTS EIIA domain. In terms of biological role, P-Ser-HPr interacts with the catabolite control protein A (CcpA), forming a complex that binds to DNA at the catabolite response elements cre, operator sites preceding a large number of catabolite-regulated genes. Thus, P-Ser-HPr is a corepressor in carbon catabolite repression (CCR), a mechanism that allows bacteria to coordinate and optimize the utilization of available carbon sources. P-Ser-HPr also plays a role in inducer exclusion, in which it probably interacts with several non-PTS permeases and inhibits their transport activity. This is Phosphocarrier protein HPr (ptsH) from Lactococcus lactis subsp. cremoris (Streptococcus cremoris).